The following is an 818-amino-acid chain: Probable beta-glucosidase I (818 aa).

A glycan (N-linked (GlcNAc...) asparagine) is linked at Asn176. Asp204 is a catalytic residue. The PA14 domain occupies 374-534 (DGKPGFTFRV…SQEELISNAV (161 aa)). 2 N-linked (GlcNAc...) asparagine glycosylation sites follow: Asn453 and Asn472.

This sequence belongs to the glycosyl hydrolase 3 family.

It is found in the secreted. The enzyme catalyses Hydrolysis of terminal, non-reducing beta-D-glucosyl residues with release of beta-D-glucose.. Its pathway is glycan metabolism; cellulose degradation. Functionally, beta-glucosidases are one of a number of cellulolytic enzymes involved in the degradation of cellulosic biomass. Catalyzes the last step releasing glucose from the inhibitory cellobiose. The chain is Probable beta-glucosidase I (bglI) from Aspergillus niger (strain ATCC MYA-4892 / CBS 513.88 / FGSC A1513).